Consider the following 297-residue polypeptide: Cytosolic Fe-S cluster assembly factor CFD1 (297 aa).

G15–S22 is a binding site for ATP. Positions 216 and 219 each coordinate [4Fe-4S] cluster.

Belongs to the Mrp/NBP35 ATP-binding proteins family. NUBP2/CFD1 subfamily. In terms of assembly, heterotetramer of 2 NBP35 and 2 CFD1 chains. It depends on [4Fe-4S] cluster as a cofactor.

Its subcellular location is the cytoplasm. Its function is as follows. Component of the cytosolic iron-sulfur (Fe/S) protein assembly (CIA) machinery. Required for maturation of extramitochondrial Fe-S proteins. The NBP35-CFD1 heterotetramer forms a Fe-S scaffold complex, mediating the de novo assembly of an Fe-S cluster and its transfer to target apoproteins. The chain is Cytosolic Fe-S cluster assembly factor CFD1 from Phaeosphaeria nodorum (strain SN15 / ATCC MYA-4574 / FGSC 10173) (Glume blotch fungus).